The primary structure comprises 161 residues: RNA pyrophosphohydrolase (161 aa).

Residues P12–K154 enclose the Nudix hydrolase domain. Positions G46–G67 match the Nudix box motif.

It belongs to the Nudix hydrolase family. RppH subfamily. Requires a divalent metal cation as cofactor.

Its function is as follows. Accelerates the degradation of transcripts by removing pyrophosphate from the 5'-end of triphosphorylated RNA, leading to a more labile monophosphorylated state that can stimulate subsequent ribonuclease cleavage. This is RNA pyrophosphohydrolase from Rickettsia conorii (strain ATCC VR-613 / Malish 7).